The following is a 216-amino-acid chain: Thymidine kinase (216 aa).

ATP is bound by residues 9–16 (GPMDSGKS) and 86–89 (DEAQ). Glu-87 functions as the Proton acceptor in the catalytic mechanism.

The protein belongs to the thymidine kinase family. In terms of assembly, homotetramer.

It localises to the cytoplasm. It catalyses the reaction thymidine + ATP = dTMP + ADP + H(+). The polypeptide is Thymidine kinase (Cutibacterium acnes (strain DSM 16379 / KPA171202) (Propionibacterium acnes)).